The chain runs to 638 residues: Guanylate-binding protein 7 (638 aa).

The GTPase domain (Globular) stretch occupies residues Met-1–Cys-310. In terms of domain architecture, GB1/RHD3-type G spans Thr-35 to Lys-277. GTP contacts are provided by residues Gly-45 to Ser-52, Leu-67 to Thr-69, and Asp-97 to Leu-101. Residues Leu-311–Leu-638 form an interaction with the CYBA-CYBB complex region. A C-terminal tail; required for its localization to cytoplasmic vesicle region spans residues Ser-590–Leu-638.

Belongs to the TRAFAC class dynamin-like GTPase superfamily. GB1/RHD3 GTPase family. GB1 subfamily. As to quaternary structure, monomer and dimer. Interacts with CYBA, CYBA-CYBB complex and ATG4B. Interacts (via GB1/RHD3-type G domain) with NCF2 and NCF2-NCF4 complex.

It localises to the cytoplasmic vesicle membrane. The enzyme catalyses GTP + H2O = GDP + phosphate + H(+). It carries out the reaction GDP + H2O = GMP + phosphate + H(+). Inhibited by orthovanadate, berylium fluoride and aluminum flouride. Its function is as follows. Interferon (IFN)-inducible GTPase that plays important roles in innate immunity against a diverse range of bacterial, viral and protozoan pathogens. Hydrolyzes GTP to GMP in two consecutive cleavage reactions and predominantly uses GTP and not GDP or GMP as the substrate. Following infection, recruited to the pathogen-containing vacuoles or vacuole-escaped bacteria and acts as a positive regulator of inflammasome assembly by promoting the release of inflammasome ligands from bacteria. Acts by promoting lysis of pathogen-containing vacuoles, releasing pathogens into the cytosol. Following pathogen release in the cytosol, promotes recruitment of proteins that mediate bacterial cytolysis, such as Gm12250/Irgb10: this liberates ligands that are detected by inflammasomes, such as lipopolysaccharide (LPS) that activates the non-canonical CASP4/CASP11 inflammasome or double-stranded DNA (dsDNA) that activates the AIM2 inflammasome. Also promotes IFN-gamma-mediated host defense against bacterial infections by regulating oxidative responses and bacteriolytic peptide generation. May help to assemble NADPH oxidase on phagosomal membranes by acting as a bridging protein between NADPH oxidase cytosolic subunits NCF2-NCF4 and the membrane subunits CYBA-CYBB. Participates along with GBP1 in trafficking monoubiquinated protein cargo to autolysosomes for generating ubiquitin-derived antimicrobial peptides. Facilitates influenza A virus replication by inhibiting the activation of NF-kappaB and JAK-STAT signaling pathways and the expression of type I, type III interferons and pro-inflammatory cytokines. Confers protection to several pathogens, including the bacterial pathogens Listeria monocytogenes and Mycobacterium bovis BCG as well as the protozoan pathogen Toxoplasma gondii. Required for disruption of the parasitophorous vacuole formed following T.gondii infection and subsequent killing of the parasite. The sequence is that of Guanylate-binding protein 7 (Gbp7) from Mus musculus (Mouse).